We begin with the raw amino-acid sequence, 221 residues long: N-(5'-phosphoribosyl)anthranilate isomerase (221 aa).

This sequence belongs to the TrpF family.

The enzyme catalyses N-(5-phospho-beta-D-ribosyl)anthranilate = 1-(2-carboxyphenylamino)-1-deoxy-D-ribulose 5-phosphate. Its pathway is amino-acid biosynthesis; L-tryptophan biosynthesis; L-tryptophan from chorismate: step 3/5. In Chlorobaculum tepidum (strain ATCC 49652 / DSM 12025 / NBRC 103806 / TLS) (Chlorobium tepidum), this protein is N-(5'-phosphoribosyl)anthranilate isomerase.